A 310-amino-acid chain; its full sequence is MKKNGLLLVNLGSPDTPTTPDVKRYLKEFLSDRNVIEMPPALWQPLLRGIILPTRSWRSATFYRNCWTKDGSPLIVYTERLVAKVQGLMPEWVVKMAMTYGKPKISDTITGMKKECQNITVLPLFPFFTKSTTQTVIDKVKDADPEAKIIDRFSAEEDYLDLLAKQIQTAWDRGKYDKLLISYHGIPTAMVNHGDPYRDETEAATAELIKRLDIPEKQIKMAYQSKFGPMPWLKPYLRNTLLNEAQLGHRDVLVVAPSFVADCLETLEEDQVQNYQVFRENGGNNLVMVPSLNDSPEFAQFITDLVQRKG.

Fe(2+) is bound by residues His-184 and Glu-265.

Belongs to the ferrochelatase family.

It localises to the cytoplasm. It carries out the reaction Fe-coproporphyrin III + 2 H(+) = coproporphyrin III + Fe(2+). It participates in porphyrin-containing compound metabolism; protoheme biosynthesis. In terms of biological role, involved in coproporphyrin-dependent heme b biosynthesis. Catalyzes the insertion of ferrous iron into coproporphyrin III to form Fe-coproporphyrin III. The sequence is that of Coproporphyrin III ferrochelatase from Limosilactobacillus reuteri (strain DSM 20016) (Lactobacillus reuteri).